Consider the following 284-residue polypeptide: Ribose-phosphate pyrophosphokinase (284 aa).

Residues 34–36 (DNE) and 92–93 (RQ) contribute to the ATP site. Mg(2+)-binding residues include His125 and Asp163. Lys186 is an active-site residue. D-ribose 5-phosphate contacts are provided by residues Arg188, Asp212, and 216 to 220 (STGGT).

The protein belongs to the ribose-phosphate pyrophosphokinase family. Class III (archaeal) subfamily. Homotetramer. Requires Mg(2+) as cofactor.

The protein localises to the cytoplasm. The enzyme catalyses D-ribose 5-phosphate + ATP = 5-phospho-alpha-D-ribose 1-diphosphate + AMP + H(+). It participates in metabolic intermediate biosynthesis; 5-phospho-alpha-D-ribose 1-diphosphate biosynthesis; 5-phospho-alpha-D-ribose 1-diphosphate from D-ribose 5-phosphate (route I): step 1/1. Its activity is regulated as follows. Activated by inorganic phosphate, with a maximal activity at 190 mM. Above this concentration inorganic phosphate progressively inhibits the kinase. Completely inhibited by ADP, and partially inhibited by alpha,beta-methylene ATP (mATP). Lack of allosteric regulation. Functionally, involved in the biosynthesis of the central metabolite phospho-alpha-D-ribosyl-1-pyrophosphate (PRPP) via the transfer of pyrophosphoryl group from ATP to 1-hydroxyl of ribose-5-phosphate (Rib-5-P). It can also use dATP as diphosphoryl donor. The polypeptide is Ribose-phosphate pyrophosphokinase (Methanocaldococcus jannaschii (strain ATCC 43067 / DSM 2661 / JAL-1 / JCM 10045 / NBRC 100440) (Methanococcus jannaschii)).